The sequence spans 400 residues: Deoxyhypusine synthase-like protein (400 aa).

The segment at Lys372–Lys400 is disordered.

It belongs to the deoxyhypusine synthase family.

This chain is Deoxyhypusine synthase-like protein, found in Cyanothece sp. (strain PCC 7425 / ATCC 29141).